The primary structure comprises 314 residues: Glyceraldehyde-3-phosphate dehydrogenase A, chloroplastic (314 aa).

NADP(+) is bound by residues 5-6, aspartate 29, and arginine 74; that span reads RI. A disulfide bond links cysteine 13 and cysteine 283. D-glyceraldehyde 3-phosphate is bound by residues 147 to 149, threonine 178, arginine 193, 206 to 207, and arginine 229; these read SCT and TG. The Nucleophile role is filled by cysteine 148. Asparagine 311 contacts NADP(+).

Belongs to the glyceraldehyde-3-phosphate dehydrogenase family. In terms of assembly, homotetramer.

It is found in the plastid. Its subcellular location is the chloroplast. It carries out the reaction D-glyceraldehyde 3-phosphate + phosphate + NADP(+) = (2R)-3-phospho-glyceroyl phosphate + NADPH + H(+). It participates in carbohydrate biosynthesis; Calvin cycle. The chain is Glyceraldehyde-3-phosphate dehydrogenase A, chloroplastic (GapA) from Scenedesmus vacuolatus (Green alga).